Here is a 149-residue protein sequence, read N- to C-terminus: MKVILLRDVPKIGKKGEIKEVSDGYARNYLIPRGFAKEYTEGLERAIKHEKEIEKRKKEREREESEKILKELKKRTHVVKVKAGEGGKIFGAVTAATLAEEISKTTGLKLDKRWFKLDKPIKELGEYSLEVSLPGGVKDTIKIRVEREE.

This sequence belongs to the bacterial ribosomal protein bL9 family.

Binds to the 23S rRNA. In Thermotoga sp. (strain RQ2), this protein is Large ribosomal subunit protein bL9.